A 193-amino-acid chain; its full sequence is HMG-Y-related protein A (193 aa).

In terms of domain architecture, H15 spans 11–81 (PIPPYPEMIL…LKNNYFRAGA (71 aa)). Residues 75 to 193 (NYFRAGAPDA…PAVPSETAAA (119 aa)) are disordered. Positions 86–92 (PKRGRGR) match the Nuclear localization signal 1 (NLS) motif. 4 DNA-binding regions (a.T hook) span residues 87 to 98 (KRGRGRPPKARD), 113 to 124 (GRGRGRPPKAKS), 138 to 149 (PKPRGRPPKKAK), and 173 to 184 (KRGRGRPPKVRP). Positions 145–149 (PKKAK) match the Nuclear localization signal 2 (NLS) motif.

Belongs to the histone H1/H5 family. In terms of processing, phosphorylated by CDK, this phosphorylation prevents DNA-binding. Motility is increased when hypophosphorylated. Acetylated.

It is found in the nucleus. The protein localises to the nucleolus. Functionally, binds A/T-rich DNA (e.g. present in the storage gamma-zein gene promoter) with a highly dynamic distribution into the nucleus. Probably involved in endosperm development, during cells shift from a mitotic cycle to endoreduplication leading to massive synthesis of storage proteins (zeins) and starch. The sequence is that of HMG-Y-related protein A from Zea mays (Maize).